Here is a 146-residue protein sequence, read N- to C-terminus: Small ribosomal subunit protein bS6 (146 aa).

Positions 94-146 are disordered; the sequence is GPITTPSPMMQEGKSRPPHSSDEDSENTAPAKAKTADSPGEDTRTTEESDPKP. Composition is skewed to basic and acidic residues over residues 106–115 and 134–146; these read GKSRPPHSSD and EDTR…DPKP.

This sequence belongs to the bacterial ribosomal protein bS6 family.

Functionally, binds together with bS18 to 16S ribosomal RNA. In Nitrosomonas europaea (strain ATCC 19718 / CIP 103999 / KCTC 2705 / NBRC 14298), this protein is Small ribosomal subunit protein bS6.